The chain runs to 443 residues: tRNA(Ile2) 2-agmatinylcytidine synthetase TiaS (443 aa).

This sequence belongs to the TiaS family.

The protein resides in the cytoplasm. The catalysed reaction is cytidine(34) in tRNA(Ile2) + agmatine + ATP + H2O = 2-agmatinylcytidine(34) in tRNA(Ile2) + AMP + 2 phosphate + 2 H(+). Functionally, ATP-dependent agmatine transferase that catalyzes the formation of 2-agmatinylcytidine (agm2C) at the wobble position (C34) of tRNA(Ile2), converting the codon specificity from AUG to AUA. In Saccharolobus islandicus (strain L.S.2.15 / Lassen #1) (Sulfolobus islandicus), this protein is tRNA(Ile2) 2-agmatinylcytidine synthetase TiaS.